A 435-amino-acid chain; its full sequence is NADH-quinone oxidoreductase subunit D (435 aa).

It belongs to the complex I 49 kDa subunit family. In terms of assembly, NDH-1 is composed of 14 different subunits. Subunits NuoB, C, D, E, F, and G constitute the peripheral sector of the complex.

It is found in the cell inner membrane. It catalyses the reaction a quinone + NADH + 5 H(+)(in) = a quinol + NAD(+) + 4 H(+)(out). NDH-1 shuttles electrons from NADH, via FMN and iron-sulfur (Fe-S) centers, to quinones in the respiratory chain. The immediate electron acceptor for the enzyme in this species is believed to be ubiquinone. Couples the redox reaction to proton translocation (for every two electrons transferred, four hydrogen ions are translocated across the cytoplasmic membrane), and thus conserves the redox energy in a proton gradient. The sequence is that of NADH-quinone oxidoreductase subunit D from Xanthomonas oryzae pv. oryzae (strain MAFF 311018).